Here is a 98-residue protein sequence, read N- to C-terminus: Co-chaperonin GroES 1 (98 aa).

This sequence belongs to the GroES chaperonin family. In terms of assembly, heptamer of 7 subunits arranged in a ring. Interacts with the chaperonin GroEL.

Its subcellular location is the cytoplasm. Functionally, together with the chaperonin GroEL, plays an essential role in assisting protein folding. The GroEL-GroES system forms a nano-cage that allows encapsulation of the non-native substrate proteins and provides a physical environment optimized to promote and accelerate protein folding. GroES binds to the apical surface of the GroEL ring, thereby capping the opening of the GroEL channel. This Rhizobium meliloti (strain 1021) (Ensifer meliloti) protein is Co-chaperonin GroES 1.